A 149-amino-acid chain; its full sequence is Acyl carrier protein 1, chloroplastic (149 aa).

Residues 1-59 (MAHCLAAVSSFSPSAVRRRLSSQVANVVSSRSSVSFHSRQMSFVSISSRPSSLRFKICC) constitute a chloroplast transit peptide. The Carrier domain maps to 69 to 144 (KETVDKVCMI…DAANLIEKLV (76 aa)). S104 is subject to O-(pantetheine 4'-phosphoryl)serine.

The protein belongs to the acyl carrier protein (ACP) family. Post-translationally, 4'-phosphopantetheine is transferred from CoA to a specific serine of apo-ACP by acpS. This modification is essential for activity because fatty acids are bound in thioester linkage to the sulfhydryl of the prosthetic group.

It localises to the plastid. It is found in the chloroplast. Its pathway is lipid metabolism; fatty acid biosynthesis. Functionally, carrier of the growing fatty acid chain in fatty acid biosynthesis. The protein is Acyl carrier protein 1, chloroplastic (ACL1.1) of Hordeum vulgare (Barley).